Here is a 110-residue protein sequence, read N- to C-terminus: Thiosulfate sulfurtransferase GlpE (110 aa).

Residues 17–105 form the Rhodanese domain; it reads RENGAQVVDI…WRSVYPADTS (89 aa). Catalysis depends on Cys65, which acts as the Cysteine persulfide intermediate.

It belongs to the GlpE family.

The protein resides in the cytoplasm. The enzyme catalyses thiosulfate + hydrogen cyanide = thiocyanate + sulfite + 2 H(+). It carries out the reaction thiosulfate + [thioredoxin]-dithiol = [thioredoxin]-disulfide + hydrogen sulfide + sulfite + 2 H(+). Transferase that catalyzes the transfer of sulfur from thiosulfate to thiophilic acceptors such as cyanide or dithiols. May function in a CysM-independent thiosulfate assimilation pathway by catalyzing the conversion of thiosulfate to sulfite, which can then be used for L-cysteine biosynthesis. The polypeptide is Thiosulfate sulfurtransferase GlpE (Pseudomonas aeruginosa (strain ATCC 15692 / DSM 22644 / CIP 104116 / JCM 14847 / LMG 12228 / 1C / PRS 101 / PAO1)).